A 184-amino-acid chain; its full sequence is Probable RNA 2'-phosphotransferase (184 aa).

It belongs to the KptA/TPT1 family.

Its function is as follows. Removes the 2'-phosphate from RNA via an intermediate in which the phosphate is ADP-ribosylated by NAD followed by a presumed transesterification to release the RNA and generate ADP-ribose 1''-2''-cyclic phosphate (APPR&gt;P). May function as an ADP-ribosylase. The polypeptide is Probable RNA 2'-phosphotransferase (Escherichia coli O9:H4 (strain HS)).